The following is a 636-amino-acid chain: 3-phosphoinositide-dependent protein kinase 1 (636 aa).

2 stretches are compositionally biased toward low complexity: residues 1–20 (MEDL…NNDT) and 27–37 (APTTLNLTPTA). The disordered stretch occupies residues 1-45 (MEDLTPTNTSLDTTTTNNDTTSDREAAPTTLNLTPTASESENSLS). Positions 69 to 364 (FMFLQSMGEG…SQELMAHKFF (296 aa)) constitute a Protein kinase domain. ATP contacts are provided by residues 79-81 (AYS) and Lys98. Residues 100–149 (LQKSYLNRHQKMDAIIREKNILTYLSQECGGHPFVTQLYTHFHDQARIYF) are PIF-pocket. Residues 152 to 154 (GLV) and Asp158 contribute to the ATP site. Residue Asp197 is the Proton acceptor of the active site. The ATP site is built by Asp201 and Asp215. 2 disordered regions span residues 233 to 264 (TDAN…EENT) and 593 to 636 (KKSR…KKSP). A coiled-coil region spans residues 550–631 (DLEKKADEWC…QVSKKLSMQM (82 aa)). Basic and acidic residues predominate over residues 597 to 624 (KEMMREQKALRRKQEKEEKKALKAEQVS).

The protein belongs to the protein kinase superfamily. AGC Ser/Thr protein kinase family. PDPK1 subfamily. As to quaternary structure, interacts directly with sgk-1, akt-1 and akt-2.

It is found in the cytoplasm. It catalyses the reaction L-seryl-[protein] + ATP = O-phospho-L-seryl-[protein] + ADP + H(+). It carries out the reaction L-threonyl-[protein] + ATP = O-phospho-L-threonyl-[protein] + ADP + H(+). Functionally, involved in the daf-2/insulin receptor-like transduction pathway, which controls longevity and prevents developmental arrest at the dauer stage. Phosphorylates and activates sgk-1, akt-1 and akt-2. This chain is 3-phosphoinositide-dependent protein kinase 1, found in Caenorhabditis elegans.